A 550-amino-acid chain; its full sequence is Formate--tetrahydrofolate ligase (550 aa).

62–69 (TPAGEGKS) contacts ATP.

Belongs to the formate--tetrahydrofolate ligase family.

The enzyme catalyses (6S)-5,6,7,8-tetrahydrofolate + formate + ATP = (6R)-10-formyltetrahydrofolate + ADP + phosphate. Its pathway is one-carbon metabolism; tetrahydrofolate interconversion. The sequence is that of Formate--tetrahydrofolate ligase from Corynebacterium diphtheriae (strain ATCC 700971 / NCTC 13129 / Biotype gravis).